Reading from the N-terminus, the 540-residue chain is Chaperonin GroEL 2 (540 aa).

Residues Thr29 to Pro32, Asp86 to Thr90, Gly413, Asn476 to Ala478, and Asp492 contribute to the ATP site.

It belongs to the chaperonin (HSP60) family. In terms of assembly, forms a cylinder of 14 subunits composed of two heptameric rings stacked back-to-back. Interacts with the co-chaperonin GroES.

The protein localises to the cytoplasm. It carries out the reaction ATP + H2O + a folded polypeptide = ADP + phosphate + an unfolded polypeptide.. Together with its co-chaperonin GroES, plays an essential role in assisting protein folding. The GroEL-GroES system forms a nano-cage that allows encapsulation of the non-native substrate proteins and provides a physical environment optimized to promote and accelerate protein folding. This Streptomyces albus G protein is Chaperonin GroEL 2.